Here is a 422-residue protein sequence, read N- to C-terminus: 26S proteasome non-ATPase regulatory subunit 11B (422 aa).

The PCI domain occupies 228-392 (AYSYFFEAFE…DVLIIFEEPP (165 aa)).

Belongs to the proteasome subunit S9 family. As to quaternary structure, component of the lid subcomplex of the 19S proteasome regulatory particle complex (also named PA700 complex). The 26S proteasome consists of a 20S proteasome core and two 19S regulatory subunits.

It is found in the nucleus. It localises to the cytoplasm. Its subcellular location is the cytosol. Component of the lid subcomplex of the 26S proteasome, a multiprotein complex involved in the ATP-dependent degradation of ubiquitinated proteins. In the complex, psmd11b is required for proteasome assembly. The chain is 26S proteasome non-ATPase regulatory subunit 11B (psmd11b) from Danio rerio (Zebrafish).